The sequence spans 644 residues: 3D-(3,5/4)-trihydroxycyclohexane-1,2-dione hydrolase 1 (644 aa).

Glu-65 provides a ligand contact to thiamine diphosphate. A thiamine pyrophosphate binding region spans residues Ser-442–Gly-522. Mg(2+)-binding residues include Asp-493 and Asn-520.

The protein belongs to the TPP enzyme family. Mg(2+) is required as a cofactor. Thiamine diphosphate serves as cofactor.

The catalysed reaction is 3D-3,5/4-trihydroxycyclohexane-1,2-dione + H2O = 5-deoxy-D-glucuronate + H(+). The protein operates within polyol metabolism; myo-inositol degradation into acetyl-CoA; acetyl-CoA from myo-inositol: step 3/7. Functionally, involved in the cleavage of the C1-C2 bond of 3D-(3,5/4)-trihydroxycyclohexane-1,2-dione (THcHDO) to yield 5-deoxy-glucuronate (5DG). The chain is 3D-(3,5/4)-trihydroxycyclohexane-1,2-dione hydrolase 1 from Bacillus cereus (strain ZK / E33L).